Consider the following 192-residue polypeptide: Protein GrpE (192 aa).

The protein belongs to the GrpE family. Homodimer.

Its subcellular location is the cytoplasm. In terms of biological role, participates actively in the response to hyperosmotic and heat shock by preventing the aggregation of stress-denatured proteins, in association with DnaK and GrpE. It is the nucleotide exchange factor for DnaK and may function as a thermosensor. Unfolded proteins bind initially to DnaJ; upon interaction with the DnaJ-bound protein, DnaK hydrolyzes its bound ATP, resulting in the formation of a stable complex. GrpE releases ADP from DnaK; ATP binding to DnaK triggers the release of the substrate protein, thus completing the reaction cycle. Several rounds of ATP-dependent interactions between DnaJ, DnaK and GrpE are required for fully efficient folding. The protein is Protein GrpE of Neisseria gonorrhoeae (strain NCCP11945).